The following is a 124-amino-acid chain: Ribonuclease pancreatic (124 aa).

Positions 1 to 15 (KESPAKKFQRQHMDP) are enriched in basic and acidic residues. Residues 1–24 (KESPAKKFQRQHMDPDSSSSNSSN) form a disordered region. Positions 7 and 10 each coordinate substrate. The active-site Proton acceptor is the histidine 12. N-linked (GlcNAc...) asparagine glycans are attached at residues asparagine 21 and asparagine 34. 4 disulfide bridges follow: cysteine 26-cysteine 84, cysteine 40-cysteine 95, cysteine 58-cysteine 110, and cysteine 65-cysteine 72. Substrate is bound by residues 41–45 (KPVNT) and lysine 66. Asparagine 76 carries an N-linked (GlcNAc...) asparagine glycan. Arginine 85 is a substrate binding site. Histidine 119 serves as the catalytic Proton donor.

This sequence belongs to the pancreatic ribonuclease family. In terms of assembly, monomer. Interacts with and forms tight 1:1 complexes with RNH1. Dimerization of two such complexes may occur. Interaction with RNH1 inhibits this protein. As to expression, pancreas.

The protein localises to the secreted. It carries out the reaction an [RNA] containing cytidine + H2O = an [RNA]-3'-cytidine-3'-phosphate + a 5'-hydroxy-ribonucleotide-3'-[RNA].. It catalyses the reaction an [RNA] containing uridine + H2O = an [RNA]-3'-uridine-3'-phosphate + a 5'-hydroxy-ribonucleotide-3'-[RNA].. In terms of biological role, endonuclease that catalyzes the cleavage of RNA on the 3' side of pyrimidine nucleotides. Acts on single-stranded and double-stranded RNA. The chain is Ribonuclease pancreatic (RNASE1) from Sus scrofa (Pig).